Here is a 428-residue protein sequence, read N- to C-terminus: Histidinol dehydrogenase (428 aa).

The NAD(+) site is built by Y127, Q189, and N212. Residues S235, Q257, and H260 each coordinate substrate. Zn(2+) is bound by residues Q257 and H260. Active-site proton acceptor residues include E325 and H326. Substrate is bound by residues H326, D359, E413, and H418. D359 is a Zn(2+) binding site. Residue H418 participates in Zn(2+) binding.

Belongs to the histidinol dehydrogenase family. The cofactor is Zn(2+).

The enzyme catalyses L-histidinol + 2 NAD(+) + H2O = L-histidine + 2 NADH + 3 H(+). Its pathway is amino-acid biosynthesis; L-histidine biosynthesis; L-histidine from 5-phospho-alpha-D-ribose 1-diphosphate: step 9/9. Functionally, catalyzes the sequential NAD-dependent oxidations of L-histidinol to L-histidinaldehyde and then to L-histidine. This Prochlorococcus marinus subsp. pastoris (strain CCMP1986 / NIES-2087 / MED4) protein is Histidinol dehydrogenase.